A 133-amino-acid chain; its full sequence is Small ribosomal subunit protein uS8 (133 aa).

The protein belongs to the universal ribosomal protein uS8 family. Part of the 30S ribosomal subunit. Contacts proteins S5 and S12.

Functionally, one of the primary rRNA binding proteins, it binds directly to 16S rRNA central domain where it helps coordinate assembly of the platform of the 30S subunit. This chain is Small ribosomal subunit protein uS8, found in Prochlorococcus marinus (strain MIT 9515).